The following is a 676-amino-acid chain: MGASGILQLPRERFRKTSFFVWVIILFHKVFSIPLGVVHNNTLQVSDIDKFVCRDKLSSTSQLKSVGLNLEGNGVATDVPTATKRWGFRAGVPPKVVNYEAGEWAENCYNLAIKKVDGSECLPEAPEGVRDFPRCRYVHKVSGTGPCPGGLAFHKEGAFFLYDRLASTIIYRGTTFAEGVIAFLILPKARKDFFQSPPLHEPANMTTDPSSYYHTTTINYVVDNFGTNTTEFLFQVDHLTYVQLEARFTPQFLVLLNETIYSDNRRSNTTGKLIWKINPTVDTSMGEWAFWENKKNFTKTLSSEELSFVPVPETQNQVLDTTATVSPPISAHNHAGEDHKELVSEDSTPVVQMQNIKGKDTMPTTVTGVPTTTPSPFPINARNTDHTKSFIGLEGPQEDHSTTQPAKTTSQPTNSTESTTLNPTSEPSSRGTGPSSPTVPNTTESHAELGKTTPTTLPEQHTAASAIPRAVHPDELSGPGFLTNTIRGVTNLLTGSRRKRRDVTPNTQPKCNPNLHYWTALDEGAAIGLAWIPYFGPAAEGIYTEGIMENQNGLICGLRQLANETTQALQLFLRATTELRTFSILNRKAIDFLLQRWGGTCHILGPDCCIEPQDWTKNITDKIDQIIHDFVDNNLPNQNDGSNWWTGWKQWVPAGIGITGVIIAIIALLCICKFML.

An N-terminal signal peptide occupies residues Met1–Ser32. The Extracellular portion of the chain corresponds to Ile33–Gln650. An N-linked (GlcNAc...) asparagine; by host glycan is attached at Asn40. 5 disulfides stabilise this stretch: Cys53/Cys609, Cys108/Cys135, Cys121/Cys147, Cys511/Cys556, and Cys601/Cys608. The receptor-binding stretch occupies residues Arg54–Glu201. 5 N-linked (GlcNAc...) asparagine; by host glycosylation sites follow: Asn204, Asn228, Asn257, Asn268, and Asn296. Positions Glu305 to Thr485 are mucin-like region. Residues Ile356–Ala463 form a disordered region. Over residues Thr361–Pro374 the composition is skewed to low complexity. A compositionally biased stretch (polar residues) spans Thr402–Asn422. N-linked (GlcNAc...) asparagine; by host glycosylation is present at Asn414. The segment covering Pro423–Pro440 has biased composition (low complexity). An N-linked (GlcNAc...) asparagine; by host glycan is attached at Asn441. The span at Thr452–Ala463 shows a compositional bias: polar residues. A fusion peptide region spans residues Gly524–Ala539. The stretch at Leu554 to Gln595 forms a coiled coil. An N-linked (GlcNAc...) asparagine; by host glycan is attached at Asn563. The stretch at Trp615–Asn634 forms a coiled coil. Asn618 carries N-linked (GlcNAc...) asparagine; by host glycosylation. A helical membrane pass occupies residues Trp651 to Ile671. 2 S-palmitoyl cysteine; by host lipidation sites follow: Cys670 and Cys672. At Cys672–Leu676 the chain is on the cytoplasmic side.

The protein belongs to the filoviruses glycoprotein family. Homotrimer; each monomer consists of a GP1 and a GP2 subunit linked by disulfide bonds. The resulting peplomers (GP1,2) protrude from the virus surface as spikes. GP1 and GP2delta are part of GP1,2delta soluble complexes released by ectodomain shedding. GP1,2 interacts with host integrin ITGAV/alpha-V and CLEC10A. Also binds human CD209 and CLEC4M (collectively referred to as DC-SIGN(R)), as well as human FOLR1. Interacts with host entry receptor NPC1. The signal peptide region modulates GP's high mannose glycosylation, thereby determining the efficiency of the interactions with DC-SIGN(R). In terms of processing, N-glycosylated. Post-translationally, O-glycosylated in the mucin-like region. Palmitoylation of GP2 is not required for its function. In terms of processing, specific enzymatic cleavages in vivo yield mature proteins. The precursor is processed into GP1 and GP2 by host cell furin in the trans Golgi, and maybe by other host proteases, to yield the mature GP1 and GP2 proteins. The cleavage site corresponds to the furin optimal cleavage sequence [KR]-X-[KR]-R. This cleavage does not seem to be required for function. After the internalization of the virus into cell endosomes, GP1 C-terminus is removed by the endosomal proteases cathepsin B, cathepsin L, or both, leaving a 19-kDa N-terminal fragment which is further digested by cathepsin B. Proteolytic processing of GP1,2 by host ADAM17 can remove the transmembrane anchor of GP2 and leads to shedding of complexes consisting in GP1 and truncated GP2 (GP1,2delta).

The protein localises to the virion membrane. It localises to the host cell membrane. The protein resides in the secreted. GP1 is responsible for binding to the receptor(s) on target cells. Interacts with CD209/DC-SIGN and CLEC4M/DC-SIGNR which act as cofactors for virus entry into the host cell. Binding to CD209 and CLEC4M, which are respectively found on dendritic cells (DCs), and on endothelial cells of liver sinusoids and lymph node sinuses, facilitate infection of macrophages and endothelial cells. These interactions not only facilitate virus cell entry, but also allow capture of viral particles by DCs and subsequent transmission to susceptible cells without DCs infection (trans infection). Binding to the macrophage specific lectin CLEC10A also seems to enhance virus infectivity. Interaction with FOLR1/folate receptor alpha may be a cofactor for virus entry in some cell types, although results are contradictory. Members of the Tyro3 receptor tyrosine kinase family also seem to be cell entry factors in filovirus infection. Once attached, the virions are internalized through clathrin-dependent endocytosis and/or macropinocytosis. After internalization of the virus into the endosomes of the host cell, proteolysis of GP1 by two cysteine proteases, CTSB/cathepsin B and CTSL/cathepsin L presumably induces a conformational change of GP2, unmasking its fusion peptide and initiating membranes fusion. Functionally, GP2 acts as a class I viral fusion protein. Under the current model, the protein has at least 3 conformational states: pre-fusion native state, pre-hairpin intermediate state, and post-fusion hairpin state. During viral and target cell membrane fusion, the coiled coil regions (heptad repeats) assume a trimer-of-hairpins structure, positioning the fusion peptide in close proximity to the C-terminal region of the ectodomain. The formation of this structure appears to drive apposition and subsequent fusion of viral and target cell membranes. Responsible for penetration of the virus into the cell cytoplasm by mediating the fusion of the membrane of the endocytosed virus particle with the endosomal membrane. Low pH in endosomes induces an irreversible conformational change in GP2, releasing the fusion hydrophobic peptide. In terms of biological role, GP1,2 which is the disulfid-linked complex of GP1 and GP2, mediates endothelial cell activation and decreases endothelial barrier function. Mediates activation of primary macrophages. At terminal stages of the viral infection, when its expression is high, GP1,2 down-modulates the expression of various host cell surface molecules that are essential for immune surveillance and cell adhesion. Down-modulates integrins ITGA1, ITGA2, ITGA3, ITGA4, ITGA5, ITGA6, ITGAV and ITGB1. GP1,2 alters the cellular recycling of the dimer alpha-V/beta-3 via a dynamin-dependent pathway. Decrease in the host cell surface expression of various adhesion molecules may lead to cell detachment, contributing to the disruption of blood vessel integrity and hemorrhages developed during Ebola virus infection (cytotoxicity). This cytotoxicity appears late in the infection, only after the massive release of viral particles by infected cells. Down-modulation of host MHC-I, leading to altered recognition by immune cells, may explain the immune suppression and inflammatory dysfunction linked to Ebola infection. Also down-modulates EGFR surface expression. Counteracts the antiviral effect of host tetherin. Its function is as follows. GP2delta is part of the complex GP1,2delta released by host ADAM17 metalloprotease. This secreted complex may play a role in the pathogenesis of the virus by efficiently blocking the neutralizing antibodies that would otherwise neutralize the virus surface glycoproteins GP1,2. Might therefore contribute to the lack of inflammatory reaction seen during infection in spite the of extensive necrosis and massive virus production. GP1,2delta does not seem to be involved in activation of primary macrophages. This chain is Envelope glycoprotein (GP), found in Tai Forest ebolavirus (strain Cote d'Ivoire-94) (TAFV).